The sequence spans 220 residues: Avenin-3 (220 aa).

The first 19 residues, 1–19 (MKTFLIFALLAMAATMATA), serve as a signal peptide directing secretion. A Pyrrolidone carboxylic acid modification is found at Gln20. 2 repeat units span residues 41 to 48 (QQMLLQQQ) and 49 to 56 (QQMLLQQQ). The tract at residues 41-56 (QQMLLQQQQQMLLQQQ) is 2 X 8 AA tandem repeats of Q-Q-M-L-L-Q-Q-Q. Intrachain disulfides connect Cys69–Cys202, Cys77–Cys96, Cys103–Cys104, and Cys116–Cys210. One copy of the 2-1 repeat lies at 128–137 (MQQQQFFQPQ). Residues 128–146 (MQQQQFFQPQMQQQFFQPQ) form a 2 X 10 AA tandem repeats of M-Q-Q-Q-Q-F-F-Q-P-Q region. The stretch at 138-146 (MQQQFFQPQ) is one 2-2; approximate repeat.

This sequence belongs to the gliadin/glutenin family. As to quaternary structure, monomer.

The protein localises to the vacuole. Seed storage protein. Serves as a source of nitrogen, carbon, and sulfur for the young developing seedling. The sequence is that of Avenin-3 from Avena sativa (Oat).